The following is an 82-amino-acid chain: RNA-binding protein Hfq (82 aa).

In terms of domain architecture, Sm spans 9-68; the sequence is DPFLNTLRKEHVPVSIYLVNGIKLQGKVDSFDQYVIMLKNTVSQMVYKHAISTIVPGRPV.

Belongs to the Hfq family. In terms of assembly, homohexamer.

In terms of biological role, RNA chaperone that binds small regulatory RNA (sRNAs) and mRNAs to facilitate mRNA translational regulation in response to envelope stress, environmental stress and changes in metabolite concentrations. Also binds with high specificity to tRNAs. The polypeptide is RNA-binding protein Hfq (Methylococcus capsulatus (strain ATCC 33009 / NCIMB 11132 / Bath)).